Here is a 129-residue protein sequence, read N- to C-terminus: Small ribosomal subunit protein uS9 (129 aa).

Residues 104–113 (TRDSRVVERK) are compositionally biased toward basic and acidic residues. Residues 104 to 129 (TRDSRVVERKKPGKRKARRSRQFSKR) are disordered. Basic residues predominate over residues 114-129 (KPGKRKARRSRQFSKR).

The protein belongs to the universal ribosomal protein uS9 family.

In Sulfurimonas denitrificans (strain ATCC 33889 / DSM 1251) (Thiomicrospira denitrificans (strain ATCC 33889 / DSM 1251)), this protein is Small ribosomal subunit protein uS9.